The sequence spans 338 residues: tRNA N6-adenosine threonylcarbamoyltransferase (338 aa).

Residues H111 and H115 each contribute to the Fe cation site. Residues 134–138 (LVSGG), D167, G180, and N272 each bind substrate. D300 is a Fe cation binding site.

It belongs to the KAE1 / TsaD family. Requires Fe(2+) as cofactor.

It localises to the cytoplasm. It catalyses the reaction L-threonylcarbamoyladenylate + adenosine(37) in tRNA = N(6)-L-threonylcarbamoyladenosine(37) in tRNA + AMP + H(+). Functionally, required for the formation of a threonylcarbamoyl group on adenosine at position 37 (t(6)A37) in tRNAs that read codons beginning with adenine. Is involved in the transfer of the threonylcarbamoyl moiety of threonylcarbamoyl-AMP (TC-AMP) to the N6 group of A37, together with TsaE and TsaB. TsaD likely plays a direct catalytic role in this reaction. The sequence is that of tRNA N6-adenosine threonylcarbamoyltransferase from Vibrio atlanticus (strain LGP32) (Vibrio splendidus (strain Mel32)).